We begin with the raw amino-acid sequence, 307 residues long: MFSFNMFDHPIPRVFQNRFSTQYRCFSVSMLAGPNDRSDVEKGGKIIMPPSALDQLSRLNITYPMLFKLTNKNSDRMTHCGVLEFVADEGICYLPHWMMQNLLLEEGGLVQVESVNLQVATYSKFQPQSPDFLDITNPKAVLENALRNFACLTTGDVIAINYNEKIYELRVMETKPDKAVSIIECDMNVDFDAPLGYKEPERQVQHEESTEGEADHSGYAGELGFRAFSGSGNRLDGKKKGVEPSPSPIKPGDIKRGIPNYEFKLGKITFIRNSRPLVKKVEEDEAGGRFVAFSGEGQSLRKKGRKP.

Met-1 bears the N-acetylmethionine mark. Ser-129, Ser-231, Ser-245, Ser-247, and Ser-299 each carry phosphoserine. Disordered stretches follow at residues 231–256 and 288–307; these read SGNRLDGKKKGVEPSPSPIKPGDIKR and GRFVAFSGEGQSLRKKGRKP.

It belongs to the UFD1 family. Heterodimer with NPLOC4, this heterodimer binds VCP and inhibits Golgi membrane fusion. Interacts with USP13. Interacts with ZFAND2B; probably through VCP. As to expression, found in adult heart, skeletal muscle and pancreas, and in fetal liver and kidney.

It is found in the nucleus. Its subcellular location is the cytoplasm. The protein resides in the cytosol. The protein operates within protein degradation; proteasomal ubiquitin-dependent pathway. In terms of biological role, essential component of the ubiquitin-dependent proteolytic pathway which degrades ubiquitin fusion proteins. The ternary complex containing UFD1, VCP and NPLOC4 binds ubiquitinated proteins and is necessary for the export of misfolded proteins from the ER to the cytoplasm, where they are degraded by the proteasome. The NPLOC4-UFD1-VCP complex regulates spindle disassembly at the end of mitosis and is necessary for the formation of a closed nuclear envelope. It may be involved in the development of some ectoderm-derived structures. Acts as a negative regulator of type I interferon production via the complex formed with VCP and NPLOC4, which binds to RIGI and recruits RNF125 to promote ubiquitination and degradation of RIGI. The protein is Ubiquitin recognition factor in ER-associated degradation protein 1 of Homo sapiens (Human).